Reading from the N-terminus, the 522-residue chain is Ankyrin repeat and death domain-containing protein 1A (522 aa).

ANK repeat units follow at residues 14–43, 47–76, 90–119, 123–152, 158–187, 191–220, 224–253, 257–286, 290–319, 323–352, and 356–385; these read PLER…NTRA, VGRV…AVDE, FGMN…KIHC, DGLT…DVAL, LGRT…DHNV, EGNT…DLEE, EGLT…TVNA, KNLS…CANV, QGAS…DVNA, RQQT…DLNL, and QGKT…FYRW. Residues 413-501 form the Death domain; sequence SVLWRLASRY…DLAGWSTMAR (89 aa).

This chain is Ankyrin repeat and death domain-containing protein 1A (ANKDD1A), found in Homo sapiens (Human).